The sequence spans 228 residues: Ribosomal RNA small subunit methyltransferase G (228 aa).

S-adenosyl-L-methionine contacts are provided by residues Gly-92, Phe-97, 115-117 (EAT), 143-144 (AE), and Arg-156.

Belongs to the methyltransferase superfamily. RNA methyltransferase RsmG family.

The protein resides in the cytoplasm. Its function is as follows. Specifically methylates the N7 position of a guanine in 16S rRNA. The polypeptide is Ribosomal RNA small subunit methyltransferase G (Thermosynechococcus vestitus (strain NIES-2133 / IAM M-273 / BP-1)).